The sequence spans 945 residues: Valine--tRNA ligase (945 aa).

The 'HIGH' region signature appears at 42–52; that stretch reads PNVTGTLHMGH. Positions 552–556 match the 'KMSKS' region motif; sequence KMSKS. Residue Lys-555 participates in ATP binding. Positions 879 to 945 form a coiled coil; sequence DKAAETARLS…VQNQLAKLKD (67 aa).

It belongs to the class-I aminoacyl-tRNA synthetase family. ValS type 1 subfamily. Monomer.

The protein localises to the cytoplasm. It catalyses the reaction tRNA(Val) + L-valine + ATP = L-valyl-tRNA(Val) + AMP + diphosphate. Its function is as follows. Catalyzes the attachment of valine to tRNA(Val). As ValRS can inadvertently accommodate and process structurally similar amino acids such as threonine, to avoid such errors, it has a 'posttransfer' editing activity that hydrolyzes mischarged Thr-tRNA(Val) in a tRNA-dependent manner. In Neisseria gonorrhoeae (strain ATCC 700825 / FA 1090), this protein is Valine--tRNA ligase.